A 138-amino-acid chain; its full sequence is Basic phospholipase A2 canebraxin B (138 aa).

The signal sequence occupies residues 1 to 16 (MRALWIVAVLLVAVEG). 7 disulfides stabilise this stretch: Cys42–Cys131, Cys44–Cys60, Cys59–Cys111, Cys65–Cys138, Cys66–Cys104, Cys73–Cys97, and Cys91–Cys102. The Ca(2+) site is built by Tyr43, Gly45, and Gly47. The active site involves His63. Asp64 is a binding site for Ca(2+). The active site involves Asp105.

The protein belongs to the phospholipase A2 family. Group II subfamily. Heterodimer of an acidic subunit and a basic chain. The acidic subunit is non-toxic, without enzymatic activity and comprises 3 peptides that are cross-linked by 7 disulfide bridges. The basic subunit is toxic, has phospholipase A2 activity and is composed of a single chain. Ca(2+) serves as cofactor. As to expression, expressed by the venom gland.

It localises to the secreted. It carries out the reaction a 1,2-diacyl-sn-glycero-3-phosphocholine + H2O = a 1-acyl-sn-glycero-3-phosphocholine + a fatty acid + H(+). Functionally, snake venom phospholipase A2 (PLA2) that shows presynaptic neurotoxicity. PLA2 catalyzes the calcium-dependent hydrolysis of the 2-acyl groups in 3-sn-phosphoglycerides. This chain is Basic phospholipase A2 canebraxin B, found in Crotalus horridus (Timber rattlesnake).